The sequence spans 537 residues: MDCKVVSLNEKDQFIPKIKSSDPVITGLFQYDAAQQISFEKRMSKENNGREAALANVIREYMNDLKLSSEQELNIQHLANGSKVVIGGQQAGLFGGPLYTFHKIFSIITLSKELTDTHKQQVVPVFWIAGEDHDFDEVNHTFVYNENHGSLHKVKYHTMEMPETTVSRYYPDKAELKQTLKTMFIHMKETVHTQGLLEICDRIIDQYDSWTDMFKALLHETFKAYGVLFIDAQFEPLRKMEAPMFKKILKKHQLLDDAFRATQKRTQNQGLKAMIQTDTNVHLFLHDENMRQLVSYDGKHFRLNKTDKKYIKEEIINIAENQPELFSNNVVTRPLMEEWLFNTVAFIGGPSEIKYWAELKDVFELFDVEMPIVMPRLRITYLNDRIEKLLSKYNIPLEKVLVDGVEGERSKFIREQASDQFIEKVEGMIEQQRRLYQDLLDEVAGNQNNINLVNKNNEIHIQQYDYLLKRYLLNIERENDISMKQFREIQETLHPMGGLQERIWNPLQILNDFGTDVFKPSTYPPLSYTFDHIIIKP.

A coiled-coil region spans residues 422–450 (IEKVEGMIEQQRRLYQDLLDEVAGNQNNI).

The protein belongs to the BshC family.

Its function is as follows. Involved in bacillithiol (BSH) biosynthesis. May catalyze the last step of the pathway, the addition of cysteine to glucosamine malate (GlcN-Mal) to generate BSH. The chain is Putative cysteine ligase BshC from Staphylococcus aureus (strain MRSA252).